A 193-amino-acid chain; its full sequence is Holliday junction branch migration complex subunit RuvA (193 aa).

Residues 1–63 (MYAYLKGKIM…EDAQLLYGFK (63 aa)) are domain I. The interval 64 to 141 (DEEEKAMFNA…TITDESELFK (78 aa)) is domain II. Residues 141 to 142 (KE) form a flexible linker region. The domain III stretch occupies residues 143–193 (VNDTLLNEALLAFEALGYSKREITKIEKELKKKQFSTVDEYVKQGLQMFVS).

This sequence belongs to the RuvA family. As to quaternary structure, homotetramer. Forms an RuvA(8)-RuvB(12)-Holliday junction (HJ) complex. HJ DNA is sandwiched between 2 RuvA tetramers; dsDNA enters through RuvA and exits via RuvB. An RuvB hexamer assembles on each DNA strand where it exits the tetramer. Each RuvB hexamer is contacted by two RuvA subunits (via domain III) on 2 adjacent RuvB subunits; this complex drives branch migration. In the full resolvosome a probable DNA-RuvA(4)-RuvB(12)-RuvC(2) complex forms which resolves the HJ.

The protein localises to the cytoplasm. Functionally, the RuvA-RuvB-RuvC complex processes Holliday junction (HJ) DNA during genetic recombination and DNA repair, while the RuvA-RuvB complex plays an important role in the rescue of blocked DNA replication forks via replication fork reversal (RFR). RuvA specifically binds to HJ cruciform DNA, conferring on it an open structure. The RuvB hexamer acts as an ATP-dependent pump, pulling dsDNA into and through the RuvAB complex. HJ branch migration allows RuvC to scan DNA until it finds its consensus sequence, where it cleaves and resolves the cruciform DNA. The protein is Holliday junction branch migration complex subunit RuvA of Macrococcus caseolyticus (strain JCSC5402) (Macrococcoides caseolyticum).